The following is a 71-amino-acid chain: Translational regulator CsrA (71 aa).

The protein belongs to the CsrA/RsmA family. Homodimer; the beta-strands of each monomer intercalate to form a hydrophobic core, while the alpha-helices form wings that extend away from the core.

It is found in the cytoplasm. A translational regulator that binds mRNA to regulate translation initiation and/or mRNA stability. Usually binds in the 5'-UTR at or near the Shine-Dalgarno sequence preventing ribosome-binding, thus repressing translation. Its main target seems to be the major flagellin gene, while its function is anatagonized by FliW. The polypeptide is Translational regulator CsrA (Clostridium botulinum (strain Alaska E43 / Type E3)).